The chain runs to 794 residues: Phenylalanine--tRNA ligase beta subunit (794 aa).

The 116-residue stretch at 39-154 (SSSFSSIITA…ANTPLGESAC (116 aa)) folds into the tRNA-binding domain. One can recognise a B5 domain in the interval 403–481 (PPSPTLTLRT…QPWKIEKKKA (79 aa)). Mg(2+)-binding residues include Asp457, Asp463, Glu466, and Glu467. In terms of domain architecture, FDX-ACB spans 697 to 793 (PIYPSSFRDI…QLDDTKGTID (97 aa)).

This sequence belongs to the phenylalanyl-tRNA synthetase beta subunit family. Type 1 subfamily. Tetramer of two alpha and two beta subunits. It depends on Mg(2+) as a cofactor.

It is found in the cytoplasm. It catalyses the reaction tRNA(Phe) + L-phenylalanine + ATP = L-phenylalanyl-tRNA(Phe) + AMP + diphosphate + H(+). In Chlamydia abortus (strain DSM 27085 / S26/3) (Chlamydophila abortus), this protein is Phenylalanine--tRNA ligase beta subunit.